A 190-amino-acid polypeptide reads, in one-letter code: Putative 3-methyladenine DNA glycosylase (190 aa).

It belongs to the DNA glycosylase MPG family.

In Rubrobacter xylanophilus (strain DSM 9941 / JCM 11954 / NBRC 16129 / PRD-1), this protein is Putative 3-methyladenine DNA glycosylase.